The primary structure comprises 387 residues: Succinate--CoA ligase [ADP-forming] subunit beta (387 aa).

Positions 9–245 (KDLLESYGLK…KSQENAKELK (237 aa)) constitute an ATP-grasp domain. ATP-binding positions include K46, 53–55 (GRG), E100, Y103, and E108. Residues N200 and D214 each contribute to the Mg(2+) site. Substrate contacts are provided by residues N265 and 322–324 (GIV).

The protein belongs to the succinate/malate CoA ligase beta subunit family. Heterotetramer of two alpha and two beta subunits. Mg(2+) serves as cofactor.

The enzyme catalyses succinate + ATP + CoA = succinyl-CoA + ADP + phosphate. The catalysed reaction is GTP + succinate + CoA = succinyl-CoA + GDP + phosphate. It functions in the pathway carbohydrate metabolism; tricarboxylic acid cycle; succinate from succinyl-CoA (ligase route): step 1/1. Succinyl-CoA synthetase functions in the citric acid cycle (TCA), coupling the hydrolysis of succinyl-CoA to the synthesis of either ATP or GTP and thus represents the only step of substrate-level phosphorylation in the TCA. The beta subunit provides nucleotide specificity of the enzyme and binds the substrate succinate, while the binding sites for coenzyme A and phosphate are found in the alpha subunit. This is Succinate--CoA ligase [ADP-forming] subunit beta from Francisella tularensis subsp. novicida (strain U112).